Here is a 440-residue protein sequence, read N- to C-terminus: Light-independent protochlorophyllide reductase subunit N (440 aa).

Positions 15, 40, and 99 each coordinate [4Fe-4S] cluster.

This sequence belongs to the BchN/ChlN family. As to quaternary structure, protochlorophyllide reductase is composed of three subunits; BchL, BchN and BchB. Forms a heterotetramer of two BchB and two BchN subunits. [4Fe-4S] cluster is required as a cofactor.

It catalyses the reaction chlorophyllide a + oxidized 2[4Fe-4S]-[ferredoxin] + 2 ADP + 2 phosphate = protochlorophyllide a + reduced 2[4Fe-4S]-[ferredoxin] + 2 ATP + 2 H2O. It participates in porphyrin-containing compound metabolism; bacteriochlorophyll biosynthesis (light-independent). In terms of biological role, component of the dark-operative protochlorophyllide reductase (DPOR) that uses Mg-ATP and reduced ferredoxin to reduce ring D of protochlorophyllide (Pchlide) to form chlorophyllide a (Chlide). This reaction is light-independent. The NB-protein (BchN-BchB) is the catalytic component of the complex. The chain is Light-independent protochlorophyllide reductase subunit N from Heliobacterium mobile (Heliobacillus mobilis).